The chain runs to 261 residues: Calcium-binding protein 8 (261 aa).

A disordered region spans residues 1–39 (MRLPEQPGEGKPENEKKGDGGALGGGEEPPRSQAPDFPT). Residues 1–234 (MRLPEQPGEG…QNRQTCVRKS (234 aa)) are Cytoplasmic-facing. The span at 8–19 (GEGKPENEKKGD) shows a compositional bias: basic and acidic residues. 2 consecutive EF-hand domains span residues 78–113 (EELD…LGYM) and 114–149 (PSEV…KLVS). Residues Asp-91, Asp-93, Asn-95, Glu-102, Asp-127, Asp-129, Asp-131, Gln-133, and Glu-138 each contribute to the Ca(2+) site. Residues 235–255 (LICAFAMAFIISVMLIAANQI) form a helical; Anchor for type IV membrane protein membrane-spanning segment. Residues 256-261 (LRSGME) are Extracellular-facing.

Interacts with PI4KB. This binding competes with FREQ/NCS1 binding in a calcium-dependent manner. As to expression, brain specific.

It localises to the golgi apparatus. Its subcellular location is the trans-Golgi network membrane. The protein resides in the cytoplasm. It is found in the perinuclear region. The protein localises to the cell membrane. Its function is as follows. Negatively regulates Golgi-to-plasma membrane trafficking by interacting with PI4KB and inhibiting its activity. May play a role in the physiology of neurons and is potentially important in memory and learning. This Homo sapiens (Human) protein is Calcium-binding protein 8 (CALN1).